We begin with the raw amino-acid sequence, 99 residues long: MNLYDVIKKPVITESSMGQLEAGKYVFEVDTRAHKLLIKQAVEAAFEGVKVANVNTINVKPKTKRVGRYVGRTNKVKKAIITLAADSKAIELFATADAE.

This sequence belongs to the universal ribosomal protein uL23 family. In terms of assembly, part of the 50S ribosomal subunit. Contacts protein L29, and trigger factor when it is bound to the ribosome.

Its function is as follows. One of the early assembly proteins it binds 23S rRNA. One of the proteins that surrounds the polypeptide exit tunnel on the outside of the ribosome. Forms the main docking site for trigger factor binding to the ribosome. The protein is Large ribosomal subunit protein uL23 of Streptococcus suis (strain 98HAH33).